Here is a 312-residue protein sequence, read N- to C-terminus: Homeobox-leucine zipper protein ATHB-5 (312 aa).

Residues Met1–Thr33 are disordered. The segment covering Asp23–Thr33 has biased composition (polar residues). The segment at residues Ala69–Gln128 is a DNA-binding region (homeobox). A leucine-zipper region spans residues Leu129–Leu164.

It belongs to the HD-ZIP homeobox family. Class I subfamily. Interacts with DNA as homodimer. In terms of tissue distribution, widely expressed.

The protein resides in the nucleus. In terms of biological role, probable transcription factor that acts as a positive regulator of ABA-responsiveness, mediating the inhibitory effect of ABA on growth during seedling establishment. Binds to the DNA sequence 5'-CAATNATTG-3'. The chain is Homeobox-leucine zipper protein ATHB-5 (ATHB-5) from Arabidopsis thaliana (Mouse-ear cress).